A 249-amino-acid polypeptide reads, in one-letter code: MIVFPAIDLMNGVCVRLRRGRADDETVFSSDPVATARHWQEQGGRWLHVVDLDGAFSGQPVNAPLIRSICDALDIPVQLGGGIRDAATAKAYLEAGVERLIIGTIALEEPDAYAALCAEFPGRIGVSLDAEGGKLKTKGWVADSGLTVDEVLPRLLEAGTAFIIYTDIDRDGMQTGVNLPALEHLAKASTVPVIAAGGVATLEDVKALYPLSRTTNLQGAVSGRAIYEGTLDLRTAMDWIRQQEKAEAC.

The active-site Proton acceptor is the Asp8. Residue Asp129 is the Proton donor of the active site.

Belongs to the HisA/HisF family.

The protein resides in the cytoplasm. The enzyme catalyses 1-(5-phospho-beta-D-ribosyl)-5-[(5-phospho-beta-D-ribosylamino)methylideneamino]imidazole-4-carboxamide = 5-[(5-phospho-1-deoxy-D-ribulos-1-ylimino)methylamino]-1-(5-phospho-beta-D-ribosyl)imidazole-4-carboxamide. It participates in amino-acid biosynthesis; L-histidine biosynthesis; L-histidine from 5-phospho-alpha-D-ribose 1-diphosphate: step 4/9. This is 1-(5-phosphoribosyl)-5-[(5-phosphoribosylamino)methylideneamino] imidazole-4-carboxamide isomerase from Nitratidesulfovibrio vulgaris (strain ATCC 29579 / DSM 644 / CCUG 34227 / NCIMB 8303 / VKM B-1760 / Hildenborough) (Desulfovibrio vulgaris).